Consider the following 155-residue polypeptide: Troponin C, isoform 3 (155 aa).

4 EF-hand domains span residues 11 to 46, 47 to 82, 87 to 122, and 123 to 155; these read EQIAVLQKAFNSFDHQKTGSIPTEMVADILRLMGQP, FDKKILEELIEEVDEDKSGRLEFGEFVQLAAKFIVE, AMQKELREAFRLYDKQGNGFIPTTCLKEILKELDDQ, and LTEQELDIMIEEIDSDGSGTVDFDEFMEMMTGE. Ca(2+) is bound by residues D60, D62, S64, R66, and E71. Residues D136, D138, S140, T142, and E147 each coordinate Ca(2+).

Belongs to the troponin C family. As to expression, present in both larval and adult muscles.

The protein is Troponin C, isoform 3 (TpnC73F) of Drosophila melanogaster (Fruit fly).